The primary structure comprises 435 residues: Eukaryotic translation initiation factor 3 subunit E (435 aa).

The region spanning 219–392 is the PCI domain; that stretch reads FFNHPKGRDL…GHVVMGTQPL (174 aa).

This sequence belongs to the eIF-3 subunit E family. In terms of assembly, component of the eukaryotic translation initiation factor 3 (eIF-3) complex. The eIF-3 complex interacts with pix. Interacts with mxt. In terms of tissue distribution, expression levels in females and males are relatively similar 10 days after oviposition, however by day 15 expression is higher in gravid females than in males (at protein level).

The protein resides in the cytoplasm. Its subcellular location is the microsome. It localises to the endoplasmic reticulum. Functionally, component of the eukaryotic translation initiation factor 3 (eIF-3) complex, which is involved in protein synthesis of a specialized repertoire of mRNAs and, together with other initiation factors, stimulates binding of mRNA and methionyl-tRNAi to the 40S ribosome. The eIF-3 complex specifically targets and initiates translation of a subset of mRNAs involved in cell proliferation. In addition to its role in the eIF-3 complex, also functions in protein ubiquitination and degradation. During mitosis required for regulating mitotic microtubule growth and kinetochore formation, and consequently is required for satisfying the spindle assembly checkpoint (SAC) during metaphase to prevent delays in mitotic progression. This is likely by promoting the ubiquitination and degradation of Klp67A, a kinesin-like protein that suppresses microtubule polymerization at plus ends. Acts in the COP9 signalosome (CSN) mediated regulation of cullin neddylation by promoting Cul1 and Cul3 neddylation and negatively regulating the CSN complex subunit CSN5. This is Eukaryotic translation initiation factor 3 subunit E from Drosophila melanogaster (Fruit fly).